We begin with the raw amino-acid sequence, 341 residues long: tRNA N6-adenosine threonylcarbamoyltransferase (341 aa).

Fe cation-binding residues include histidine 111 and histidine 115. Residues 134–138 (LVSGG), aspartate 167, glycine 180, and asparagine 276 contribute to the substrate site. Residue aspartate 304 coordinates Fe cation.

It belongs to the KAE1 / TsaD family. Fe(2+) serves as cofactor.

The protein localises to the cytoplasm. The enzyme catalyses L-threonylcarbamoyladenylate + adenosine(37) in tRNA = N(6)-L-threonylcarbamoyladenosine(37) in tRNA + AMP + H(+). Its function is as follows. Required for the formation of a threonylcarbamoyl group on adenosine at position 37 (t(6)A37) in tRNAs that read codons beginning with adenine. Is involved in the transfer of the threonylcarbamoyl moiety of threonylcarbamoyl-AMP (TC-AMP) to the N6 group of A37, together with TsaE and TsaB. TsaD likely plays a direct catalytic role in this reaction. The polypeptide is tRNA N6-adenosine threonylcarbamoyltransferase (Pseudomonas paraeruginosa (strain DSM 24068 / PA7) (Pseudomonas aeruginosa (strain PA7))).